The primary structure comprises 472 residues: MSRRVVRQSKFRHVFGQAAKADQAYEDIRVSKVTWDSSFCAVNPKFLAIIVEAGGGGAFIVLPLAKTGRVDKNYPLVTGHTAPVLDIDWCPHNDNVIASASDDTTIMVWQIPDYTPMRNITEPIITLEGHSKRVGILSWHPTARNVLLSAGGDNVIIIWNVGTGEVLLSLDDMHPDVIHSVCWNSNGSLLATTCKDKTLRIIDPRKGQVVAEQARPHEGARPLRAVFTADGKLLSTGFSRMSERQLALWDPNNFEEPVALQEMDTSNGVLLPFYDPDSSIVYLCGKGDSSIRYFEITDEPPFVHYLNTFSSKEPQRGMGFMPKRGLDVSKCEIARFYKLHERKCEPIIMTVPRKSDLFQDDLYPDTPGPEPALEADEWLSGQDAEPVLISLRDGYVPPKHRELRVTKRNILDVRPPSGPRRSQSASDAPLSQQHTLETLLEEIKALRERVQAQEQRITALENMLCELVDGTD.

WD repeat units follow at residues 23–64 (QAYE…VLPL), 72–111 (KNYP…VWQI), 122–161 (EPII…IWNV), 165–204 (EVLL…IIDP), 210–251 (VAEQ…LWDP), and 256–296 (EPVA…YFEI). A disordered region spans residues 407–433 (KRNILDVRPPSGPRRSQSASDAPLSQQ). Positions 420–433 (RRSQSASDAPLSQQ) are enriched in polar residues. Residues 430–464 (LSQQHTLETLLEEIKALRERVQAQEQRITALENML) are a coiled coil.

The protein is Coronin-6 (CORO6) of Homo sapiens (Human).